Reading from the N-terminus, the 124-residue chain is Small ribosomal subunit protein eS25 (124 aa).

The segment covering 1-22 (PPKDDKKKKDAGKSAKKDKDPV) has biased composition (basic and acidic residues). Positions 1–37 (PPKDDKKKKDAGKSAKKDKDPVNKSGGKAKKKKWSKG) are disordered. Over residues 27-37 (GKAKKKKWSKG) the composition is skewed to basic residues. The residue at position 42 (lysine 42) is an N6-acetyllysine. Lysine 51 is subject to N6-acetyllysine; alternate. An N6-succinyllysine; alternate modification is found at lysine 51. N6-acetyllysine is present on residues lysine 59 and lysine 65. Lysine 93 carries the N6-acetyllysine; alternate modification. Position 93 is an N6-succinyllysine; alternate (lysine 93).

It belongs to the eukaryotic ribosomal protein eS25 family. Component of the small ribosomal subunit.

The protein resides in the cytoplasm. Component of the small ribosomal subunit. The ribosome is a large ribonucleoprotein complex responsible for the synthesis of proteins in the cell. The sequence is that of Small ribosomal subunit protein eS25 (RPS25) from Oryctolagus cuniculus (Rabbit).